The chain runs to 283 residues: V-set domain containing T-cell activation inhibitor 1 (283 aa).

A signal peptide spans 1–24 (MASLGQIIFWSIINIIIILAGAIA). 2 consecutive Ig-like V-type domains span residues 35–144 (HFIT…ANLE) and 153–241 (PEIN…IKVT). Disulfide bonds link Cys56-Cys130 and Cys168-Cys225. A glycan (N-linked (GlcNAc...) asparagine) is linked at Asn216. Gly257 is lipidated: GPI-anchor amidated glycine. Positions 258–283 (PSPCVFSSAFVAGWALLSLSCCLMLR) are cleaved as a propeptide — removed in mature form.

This sequence belongs to the immunoglobulin superfamily. BTN/MOG family. Post-translationally, N-glycosylated. In terms of tissue distribution, expressed on the surface of professional antigen-presenting cells (at protein level). Widely expressed, including in kidney, liver, lung, pancreas, placenta, prostate, spleen, testis and thymus.

It localises to the cell membrane. Its function is as follows. Negatively regulates T-cell-mediated immune response by inhibiting T-cell activation, proliferation, cytokine production and development of cytotoxicity. When expressed on the cell surface of tumor macrophages, plays an important role, together with regulatory T-cells (Treg), in the suppression of tumor-associated antigen-specific T-cell immunity. Involved in promoting epithelial cell transformation. This is V-set domain containing T-cell activation inhibitor 1 from Mus musculus (Mouse).